Reading from the N-terminus, the 529-residue chain is Bifunctional purine biosynthesis protein PurH (529 aa).

The MGS-like domain occupies 1-148 (MNNARPIRRA…KNHKDVVIVV (148 aa)).

This sequence belongs to the PurH family.

The enzyme catalyses (6R)-10-formyltetrahydrofolate + 5-amino-1-(5-phospho-beta-D-ribosyl)imidazole-4-carboxamide = 5-formamido-1-(5-phospho-D-ribosyl)imidazole-4-carboxamide + (6S)-5,6,7,8-tetrahydrofolate. It catalyses the reaction IMP + H2O = 5-formamido-1-(5-phospho-D-ribosyl)imidazole-4-carboxamide. Its pathway is purine metabolism; IMP biosynthesis via de novo pathway; 5-formamido-1-(5-phospho-D-ribosyl)imidazole-4-carboxamide from 5-amino-1-(5-phospho-D-ribosyl)imidazole-4-carboxamide (10-formyl THF route): step 1/1. It functions in the pathway purine metabolism; IMP biosynthesis via de novo pathway; IMP from 5-formamido-1-(5-phospho-D-ribosyl)imidazole-4-carboxamide: step 1/1. The protein is Bifunctional purine biosynthesis protein PurH of Shewanella amazonensis (strain ATCC BAA-1098 / SB2B).